The following is a 382-amino-acid chain: Dual-specificity RNA methyltransferase RlmN (382 aa).

The active-site Proton acceptor is the Glu94. Residues 100–336 (EANRGTLCVS…NTITRKTRGD (237 aa)) enclose the Radical SAM core domain. A disulfide bridge connects residues Cys107 and Cys342. Positions 114, 118, and 121 each coordinate [4Fe-4S] cluster. S-adenosyl-L-methionine-binding positions include 168-169 (GE), Ser200, 222-224 (SLH), and Asn299. The S-methylcysteine intermediate role is filled by Cys342.

This sequence belongs to the radical SAM superfamily. RlmN family. The cofactor is [4Fe-4S] cluster.

The protein localises to the cytoplasm. It carries out the reaction adenosine(2503) in 23S rRNA + 2 reduced [2Fe-2S]-[ferredoxin] + 2 S-adenosyl-L-methionine = 2-methyladenosine(2503) in 23S rRNA + 5'-deoxyadenosine + L-methionine + 2 oxidized [2Fe-2S]-[ferredoxin] + S-adenosyl-L-homocysteine. The catalysed reaction is adenosine(37) in tRNA + 2 reduced [2Fe-2S]-[ferredoxin] + 2 S-adenosyl-L-methionine = 2-methyladenosine(37) in tRNA + 5'-deoxyadenosine + L-methionine + 2 oxidized [2Fe-2S]-[ferredoxin] + S-adenosyl-L-homocysteine. Functionally, specifically methylates position 2 of adenine 2503 in 23S rRNA and position 2 of adenine 37 in tRNAs. m2A2503 modification seems to play a crucial role in the proofreading step occurring at the peptidyl transferase center and thus would serve to optimize ribosomal fidelity. This chain is Dual-specificity RNA methyltransferase RlmN, found in Legionella pneumophila (strain Lens).